We begin with the raw amino-acid sequence, 154 residues long: Ubiquitin-like protein 4A (154 aa).

The region spanning 1–76 is the Ubiquitin-like domain; the sequence is MILTVKPLQG…LNLVVRPAGE (76 aa).

In terms of assembly, component of the bag6/bat3 complex.

The protein localises to the cytoplasm. The protein resides in the cytosol. Its subcellular location is the nucleus. Functionally, as part of a cytosolic protein quality control complex, the bag6/bat3 complex, maintains misfolded and hydrophobic patches-containing proteins in a soluble state and participates in their proper delivery to the endoplasmic reticulum or alternatively can promote their sorting to the proteasome where they undergo degradation. The bag6/bat3 complex is involved in the post-translational delivery of tail-anchored/type II transmembrane proteins to the endoplasmic reticulum membrane. Similarly, the bag6/bat3 complex also functions as a sorting platform for proteins of the secretory pathway that are mislocalized to the cytosol either delivering them to the proteasome for degradation or to the endoplasmic reticulum. The bag6/bat3 complex also plays a role in the endoplasmic reticulum-associated degradation (ERAD), a quality control mechanism that eliminates unwanted proteins of the endoplasmic reticulum through their retrotranslocation to the cytosol and their targeting to the proteasome. It maintains these retrotranslocated proteins in an unfolded yet soluble state condition in the cytosol to ensure their proper delivery to the proteasome. This Esox lucius (Northern pike) protein is Ubiquitin-like protein 4A (ubl4a).